A 338-amino-acid chain; its full sequence is General transcription and DNA repair factor IIH subunit TFB4 (338 aa).

At Met-1 the chain carries N-acetylmethionine. The segment at 289-308 adopts a C4-type zinc-finger fold; sequence CSVCLCVLSIIPPGNKCPAC.

This sequence belongs to the TFB4 family. Component of the 7-subunit TFIIH core complex composed of XPB/SSL2, XPD/RAD3, SSL1, TFB1, TFB2, TFB4 and TFB5, which is active in NER. The core complex associates with the 3-subunit CTD-kinase module TFIIK composed of CCL1, KIN28 and TFB3 to form the 10-subunit holoenzyme (holo-TFIIH) active in transcription. An additionnal subunit, TFB6, plays a role in the dissociation of the SSL2 helicase from TFIIH after transcription initiation.

The protein localises to the nucleus. Its function is as follows. Component of the general transcription and DNA repair factor IIH (TFIIH) core complex, which is involved in general and transcription-coupled nucleotide excision repair (NER) of damaged DNA and, when complexed to TFIIK, in RNA transcription by RNA polymerase II. In NER, TFIIH acts by opening DNA around the lesion to allow the excision of the damaged oligonucleotide and its replacement by a new DNA fragment. In transcription, TFIIH has an essential role in transcription initiation. When the pre-initiation complex (PIC) has been established, TFIIH is required for promoter opening and promoter escape. Phosphorylation of the C-terminal tail (CTD) of the largest subunit of RNA polymerase II by the kinase module TFIIK controls the initiation of transcription. The polypeptide is General transcription and DNA repair factor IIH subunit TFB4 (TFB4) (Saccharomyces cerevisiae (strain ATCC 204508 / S288c) (Baker's yeast)).